We begin with the raw amino-acid sequence, 249 residues long: uncharacterized protein (249 aa).

This sequence belongs to the chlamydial CPn_0206/CT203/TC_0475 family.

This is an uncharacterized protein from Chlamydia muridarum (strain MoPn / Nigg).